A 108-amino-acid chain; its full sequence is Ig kappa chain V region BS-5 (108 aa).

The framework-1 stretch occupies residues 1–23; that stretch reads DVVMTQTPASVSEPVGGTVTIKC. 2 cysteine pairs are disulfide-bonded: Cys23-Cys88 and Cys80-Gly108. Positions 24–34 are complementarity-determining-1; the sequence is QASQSIYSNLA. Positions 35-49 are framework-2; that stretch reads WYQZKPGQPPKLLIY. A complementarity-determining-2 region spans residues 50 to 56; that stretch reads KASTLES. The interval 57 to 88 is framework-3; that stretch reads GVPSRFKGSGSGTDFTLTISDLECADAATYFC. Residues 89-97 are complementarity-determining-3; that stretch reads QGSBYTGTV. The tract at residues 98 to 107 is framework-4; the sequence is FGGGTEVVVK.

The protein is Ig kappa chain V region BS-5 of Oryctolagus cuniculus (Rabbit).